We begin with the raw amino-acid sequence, 236 residues long: Small ribosomal subunit protein uS3 (236 aa).

The 69-residue stretch at 39 to 107 (IREFLTEELK…DTSLNIVEVR (69 aa)) folds into the KH type-2 domain. The interval 214–236 (ASERRAVEGDNQGSSSNRRRENA) is disordered.

The protein belongs to the universal ribosomal protein uS3 family. Part of the 30S ribosomal subunit. Forms a tight complex with proteins S10 and S14.

In terms of biological role, binds the lower part of the 30S subunit head. Binds mRNA in the 70S ribosome, positioning it for translation. This chain is Small ribosomal subunit protein uS3, found in Brucella canis (strain ATCC 23365 / NCTC 10854 / RM-666).